The chain runs to 337 residues: RNA 3'-terminal phosphate cyclase (337 aa).

ATP is bound by residues Gln-101 and 282-285; that span reads HMSD. Residue His-306 is the Tele-AMP-histidine intermediate of the active site.

The protein belongs to the RNA 3'-terminal cyclase family. Type 1 subfamily.

It localises to the cytoplasm. It carries out the reaction a 3'-end 3'-phospho-ribonucleotide-RNA + ATP = a 3'-end 2',3'-cyclophospho-ribonucleotide-RNA + AMP + diphosphate. In terms of biological role, catalyzes the conversion of 3'-phosphate to a 2',3'-cyclic phosphodiester at the end of RNA. The mechanism of action of the enzyme occurs in 3 steps: (A) adenylation of the enzyme by ATP; (B) transfer of adenylate to an RNA-N3'P to produce RNA-N3'PP5'A; (C) and attack of the adjacent 2'-hydroxyl on the 3'-phosphorus in the diester linkage to produce the cyclic end product. The biological role of this enzyme is unknown but it is likely to function in some aspects of cellular RNA processing. This is RNA 3'-terminal phosphate cyclase from Saccharolobus islandicus (strain M.16.4 / Kamchatka #3) (Sulfolobus islandicus).